Reading from the N-terminus, the 214-residue chain is Hypoxanthine-guanine phosphoribosyltransferase (214 aa).

An N-acetylalanine modification is found at A2. Residue K69 coordinates GMP. The residue at position 103 (K103) is an N6-acetyllysine. A Glycyl lysine isopeptide (Lys-Gly) (interchain with G-Cter in SUMO1); alternate cross-link involves residue K115. Residue K115 forms a Glycyl lysine isopeptide (Lys-Gly) (interchain with G-Cter in SUMO2); alternate linkage. Residues 134–142 (EDIIDTGKT), K166, 186–188 (KFV), and D194 each bind GMP. The active-site Proton acceptor is the D138. T142 bears the Phosphothreonine mark. D194 contributes to the Mg(2+) binding site.

The protein belongs to the purine/pyrimidine phosphoribosyltransferase family. As to quaternary structure, homotetramer. Requires Mg(2+) as cofactor.

The protein localises to the cytoplasm. The catalysed reaction is IMP + diphosphate = hypoxanthine + 5-phospho-alpha-D-ribose 1-diphosphate. It catalyses the reaction GMP + diphosphate = guanine + 5-phospho-alpha-D-ribose 1-diphosphate. It functions in the pathway purine metabolism; IMP biosynthesis via salvage pathway; IMP from hypoxanthine: step 1/1. Converts guanine to guanosine monophosphate, and hypoxanthine to inosine monophosphate. Transfers the 5-phosphoribosyl group from 5-phosphoribosylpyrophosphate onto the purine. Plays a central role in the generation of purine nucleotides through the purine salvage pathway. This chain is Hypoxanthine-guanine phosphoribosyltransferase (Hprt1), found in Mus spretus (Western Mediterranean mouse).